The sequence spans 298 residues: Exosome complex component Rrp4 (298 aa).

The S1 motif domain maps to 63–131; that stretch reads GDVVIGKIKD…EVKKVKLGLK (69 aa). The 59-residue stretch at 139 to 197 folds into the KH domain; that stretch reads RGGIIVDITPTKVPRLIGKKGSMINMIKDKTNCKIIVGQNGLVWVKGEEDMEQLTKDII. The segment at 276–298 is disordered; that stretch reads KNKKDKPLSYGNNSGNSYILNNR. A compositionally biased stretch (polar residues) spans 285–298; sequence YGNNSGNSYILNNR.

This sequence belongs to the RRP4 family. In terms of assembly, component of the archaeal exosome complex. Forms a trimer of Rrp4 and/or Csl4 subunits. The trimer associates with a hexameric ring-like arrangement composed of 3 Rrp41-Rrp42 heterodimers.

The protein resides in the cytoplasm. Non-catalytic component of the exosome, which is a complex involved in RNA degradation. Increases the RNA binding and the efficiency of RNA degradation. Confers strong poly(A) specificity to the exosome. This Methanobrevibacter smithii (strain ATCC 35061 / DSM 861 / OCM 144 / PS) protein is Exosome complex component Rrp4.